The primary structure comprises 362 residues: Alternative oxidase, mitochondrial (362 aa).

Residues 1 to 64 (MNTPKVNILH…RNFSTTSVTR (64 aa)) constitute a mitochondrion transit peptide. Residues 156–176 (LVRFIFLESIAGVPGMVAGML) form a helical membrane-spanning segment. Fe cation-binding residues include glutamate 163, glutamate 202, and histidine 205. Residues 222–242 (LILGAQGVFFNAMFLSYLISP) form a helical membrane-spanning segment. Fe cation is bound by residues glutamate 253, glutamate 310, and histidine 313.

The protein belongs to the alternative oxidase family. Homodimer; disulfide-linked. It depends on Fe cation as a cofactor.

Its subcellular location is the mitochondrion inner membrane. Catalyzes cyanide-resistant oxygen consumption. May increase respiration when the cytochrome respiratory pathway is restricted, or in response to low temperatures. The chain is Alternative oxidase, mitochondrial (aod-1) from Neurospora crassa (strain ATCC 24698 / 74-OR23-1A / CBS 708.71 / DSM 1257 / FGSC 987).